The sequence spans 274 residues: tRNA-cytidine(32) 2-sulfurtransferase (274 aa).

The PP-loop motif signature appears at 40 to 45 (SGGKDS). Residues Cys115, Cys118, and Cys206 each contribute to the [4Fe-4S] cluster site.

It belongs to the TtcA family. In terms of assembly, homodimer. Requires Mg(2+) as cofactor. The cofactor is [4Fe-4S] cluster.

Its subcellular location is the cytoplasm. It carries out the reaction cytidine(32) in tRNA + S-sulfanyl-L-cysteinyl-[cysteine desulfurase] + AH2 + ATP = 2-thiocytidine(32) in tRNA + L-cysteinyl-[cysteine desulfurase] + A + AMP + diphosphate + H(+). It functions in the pathway tRNA modification. In terms of biological role, catalyzes the ATP-dependent 2-thiolation of cytidine in position 32 of tRNA, to form 2-thiocytidine (s(2)C32). The sulfur atoms are provided by the cysteine/cysteine desulfurase (IscS) system. The polypeptide is tRNA-cytidine(32) 2-sulfurtransferase (Pseudomonas putida (strain W619)).